The sequence spans 334 residues: Mucin-15 (334 aa).

The first 23 residues, 1–23 (MLALAKILLISTLFYSLLSGSHG), serve as a signal peptide directing secretion. Residues 24-236 (KENQDINTTQ…SDPQKENRNT (213 aa)) lie on the Extracellular side of the membrane. N-linked (GlcNAc...) asparagine glycans are attached at residues Asn-30, Asn-61, Asn-79, Asn-90, Asn-148, Asn-155, Asn-163, Asn-218, and Asn-225. Residues 64-104 (TSNLKASHSPPLNLPNNSHGITDFSSNSSAEHSLGSLKPTS) form a disordered region. Residues 77 to 94 (LPNNSHGITDFSSNSSAE) show a composition bias toward polar residues. The chain crosses the membrane as a helical span at residues 237 to 257 (GIVFGAILGAILGVSLLTLVG). Topologically, residues 258-334 (YLLCGKRKTD…DDIPPLRTSV (77 aa)) are cytoplasmic. Residues 304–334 (PTLNDSAMPESEENARDGIPMDDIPPLRTSV) are disordered.

In terms of processing, highly glycosylated (N- and O-linked carbohydrates). In terms of tissue distribution, expressed in spleen, thymus, prostate, testis, ovary, small intestine, colon, peripheral blood leukocyte, bone marrow, lymph node and lung.

The protein localises to the cell membrane. It localises to the secreted. In terms of biological role, may play a role in the cell adhesion to the extracellular matrix. The polypeptide is Mucin-15 (MUC15) (Homo sapiens (Human)).